The primary structure comprises 65 residues: MPKMKSNKGASKRFKKTASGGFKCKQSHLRHILTKKSPKRKRQLRAKSMVHEADVKLVVRMLPYA.

The tract at residues M1 to Q26 is disordered.

The protein belongs to the bacterial ribosomal protein bL35 family.

The polypeptide is Large ribosomal subunit protein bL35 (Idiomarina loihiensis (strain ATCC BAA-735 / DSM 15497 / L2-TR)).